The sequence spans 256 residues: Sugar fermentation stimulation protein homolog (256 aa).

Positions 128-141 (TGSTDTSFSGTPPT) are enriched in low complexity. The disordered stretch occupies residues 128–149 (TGSTDTSFSGTPPTNTEPANTK).

It belongs to the SfsA family.

This is Sugar fermentation stimulation protein homolog from Shewanella sediminis (strain HAW-EB3).